The chain runs to 424 residues: Vasopressin V1b receptor (424 aa).

Positions 1–22 (MDSGPLWDANPTPRGTLSAPNA) are disordered. Topologically, residues 1 to 35 (MDSGPLWDANPTPRGTLSAPNATTPWLGRDEELAK) are extracellular. The segment covering 13-22 (PRGTLSAPNA) has biased composition (polar residues). Asn21 carries an N-linked (GlcNAc...) asparagine glycan. A helical transmembrane segment spans residues 36–59 (VEIGVLATVLVLATGGNLAVLLTL). Over 60–71 (GQLGRKRSRMHL) the chain is Cytoplasmic. A helical membrane pass occupies residues 72 to 93 (FVLHLALTDLAVALFQVLPQLL). Residues 94-108 (WDITYRFQGPDLLCR) are Extracellular-facing. Cysteines 107 and 186 form a disulfide. Residues 109 to 130 (AVKYLQVLSMFASTYMLLAMTL) form a helical membrane-spanning segment. Residues 131-151 (DRYLAVCHPLRSLQQPGQSTY) lie on the Cytoplasmic side of the membrane. Residues 152-173 (LLIAAPWLLAAIFSLPQVFIFS) traverse the membrane as a helical segment. At 174–201 (LREVIQGSGVLDCWADFGFPWGPRAYLT) the chain is on the extracellular side. The helical transmembrane segment at 202–222 (WTTLAIFVLPVTMLTACYSLI) threads the bilayer. The Cytoplasmic portion of the chain corresponds to 223–283 (CHEICKNLKV…RAKIRTVKMT (61 aa)). Residues 284–303 (FVIVLAYIACWAPFFSVQMW) traverse the membrane as a helical segment. Residues 304–321 (SVWDKNAPDEDSTNVAFT) are Extracellular-facing. A helical membrane pass occupies residues 322–341 (ISMLLGNLNSCCNPWIYMGF). Residues 342 to 424 (NSHLLPRPLR…GEGTAETIIF (83 aa)) are Cytoplasmic-facing. Residues 398 to 417 (SGRPRPEESPRDLELADGEG) form a disordered region. The span at 401–411 (PRPEESPRDLE) shows a compositional bias: basic and acidic residues.

The protein belongs to the G-protein coupled receptor 1 family. Vasopressin/oxytocin receptor subfamily.

It is found in the cell membrane. Functionally, receptor for arginine vasopressin. The activity of this receptor is mediated by G proteins which activate a phosphatidyl-inositol-calcium second messenger system. In terms of biological role, (Microbial infection) During SARS coronavirus-2/SARS-CoV-2 infection, may recognize and internalize the complex formed by AVP/Arg-vasopressin, SARS-CoV-2 spike protein and secreted ACE2 through DNM2/dynamin 2-dependent endocytosis. The polypeptide is Vasopressin V1b receptor (Homo sapiens (Human)).